A 60-amino-acid chain; its full sequence is Potassium channel toxin alpha-KTx 3.6 (60 aa).

The signal sequence occupies residues M1–G22. Cystine bridges form between C29–C49, C35–C54, and C39–C56. At K59 the chain carries Lysine amide.

This sequence belongs to the short scorpion toxin superfamily. Potassium channel inhibitor family. Alpha-KTx 03 subfamily. As to expression, expressed by the venom gland.

The protein localises to the secreted. Functionally, blocks voltage-gated potassium channels. At 2 uM, blocks rat Kv1.1/KCNA1 and Kv1.3/KCNA3, has a strong effect on rat Kv1.2/KCNA2 and Kv1.6/KCNA6 as well as a moderate effect on Shaker IR. In Olivierus martensii (Manchurian scorpion), this protein is Potassium channel toxin alpha-KTx 3.6.